A 643-amino-acid chain; its full sequence is E3 ubiquitin-protein ligase AMFR (643 aa).

The disordered stretch occupies residues 39–67; the sequence is PEAGPGEPDQLTASLQPEPPAPARPSAGG. 6 consecutive transmembrane segments (helical) span residues 82-102, 122-142, 145-165, 186-206, 215-235, and 276-296; these read LFVWVLVNTACCVLMLVAKLI, FWNFIFYKFIFIFGVLNVQTV, VVMWCLWFAGLVFLHLMVQLC, VLSLLVAMLLSCCGLAAVCSI, TLAFMAAESLLVTVRTAHVIL, and HIHMLLFGNIWLSMASLVIFM. The RING-type zinc finger occupies 341–379; the sequence is CAICWDSMQAARKLPCGHLFHNSCLRSWLEQDTSCPTCR. The chain crosses the membrane as a helical span at residues 429-449; that stretch reads IASWLPSFSVEVMHTTNILGI. The CUE domain occupies 456-498; that stretch reads QLNAMAHQIQEMFPQVPYHLVLQDLQLTRSVEITTDNILEGRI. 2 disordered regions span residues 504–579 and 596–624; these read TQRS…DERQ and RFLNKSSEDDAASESFLPSEGASSDPVTL. Serine 516, serine 523, and serine 542 each carry phosphoserine. The span at 548–563 shows a compositional bias: acidic residues; sequence TLDFGEVEVEPSEVED. The segment covering 564–579 has biased composition (basic and acidic residues); that stretch reads FEARGSRFSKSADERQ. The segment at 622 to 640 is VCP/p97-interacting motif (VIM); it reads VTLRRRMLAAAAERRLQKQ.

As to quaternary structure, interacts with RNF5. Also forms an ERAD complex containing VCP/p97, NGLY1; PSMC1; SAKS1 and RAD23B required for coupling retrotranslocation, ubiquitination and deglycosylation. Interacts with DERL1. Interacts (through a region distinct from the RING finger) with UBE2G2/UBC7. Component of the VCP/p97-AMFR/gp78 complex that enhances VCP/p97 binding to polyubiquitinated proteins for their degradation by the endoplasmic reticulum-associated degradation (ERAD) pathway. Interacts (via the VIM) with VCP/p97. Interacts (via its membrane domain) with INSIG1; the interaction initiates the sterol-mediated ubiquitination and degradation of HMGCR by the ERAD pathway. Interacts with AUP1, UBE2G2 and RNF139/TRC8; interaction with AUP1 facilitates interaction of AMFR with ubiquitin-conjugating enzyme UBE2G2 and ubiquitin ligase RNF139, leading to sterol-induced ubiquitination of HMGCR and its subsequent proteasomal degradation. Interacts with BAG6. Interacts with USP13 (via UBA 2 domain); the interaction is direct. Interacts with LMBR1L. Interacts with UBAC2 and CTNNB1. Interacts with C18orf32. (Microbial infection) Interacts with Staphylococcus aureus HIgB; this interaction regulates AMFR-mediated inflammation by promoting TAB3 ubiquitination to promote TAB3-TAK1 complex formation. In terms of processing, palmitoylation of the RING-type zing finger by ZDHHC6 promotes localization to the peripheral endoplasmic reticulum. As to expression, widely expressed.

The protein localises to the endoplasmic reticulum membrane. It catalyses the reaction [E2 ubiquitin-conjugating enzyme]-S-ubiquitinyl-L-cysteine + [acceptor protein]-L-cysteine = [E2 ubiquitin-conjugating enzyme]-L-cysteine + [acceptor protein]-S-ubiquitinyl-L-cysteine.. It functions in the pathway protein modification; protein ubiquitination. E3 ubiquitin-protein ligase that mediates the polyubiquitination of lysine and cysteine residues on target proteins, such as CD3D, CYP3A4, CFTR, INSIG1, SOAT2/ACAT2 and APOB for proteasomal degradation. Component of a VCP/p97-AMFR/gp78 complex that participates in the final step of endoplasmic reticulum-associated degradation (ERAD). The VCP/p97-AMFR/gp78 complex is involved in the sterol-accelerated ERAD degradation of HMGCR through binding to the HMGCR-INSIG1 complex at the ER membrane. In addition, interaction of AMFR with AUP1 facilitates interaction of AMFR with ubiquitin-conjugating enzyme UBE2G2 and ubiquitin ligase RNF139, leading to sterol-induced HMGCR ubiquitination. The ubiquitinated HMGCR is then released from the ER into the cytosol for subsequent destruction. In addition to ubiquitination on lysine residues, catalyzes ubiquitination on cysteine residues: together with INSIG1, mediates polyubiquitination of SOAT2/ACAT2 at 'Cys-277', leading to its degradation when the lipid levels are low. Catalyzes ubiquitination and subsequent degradation of INSIG1 when cells are depleted of sterols. Mediates polyubiquitination of INSIG2 at 'Cys-215' in some tissues, leading to its degradation. Also regulates ERAD through the ubiquitination of UBL4A a component of the BAG6/BAT3 complex. Also acts as a scaffold protein to assemble a complex that couples ubiquitination, retranslocation and deglycosylation. Mediates tumor invasion and metastasis as a receptor for the GPI/autocrine motility factor. In association with LMBR1L and UBAC2, negatively regulates the canonical Wnt signaling pathway in the lymphocytes by promoting the ubiquitin-mediated degradation of CTNNB1 and Wnt receptors FZD6 and LRP6. Regulates NF-kappa-B and MAPK signaling pathways by mediating 'Lys-27'-linked polyubiquitination of TAB3 and promoting subsequent TAK1/MAP3K7 activation. Required for proper lipid homeostasis. In Homo sapiens (Human), this protein is E3 ubiquitin-protein ligase AMFR.